The sequence spans 750 residues: DDT domain-containing protein DDR4 (750 aa).

The segment at 1–125 (MGSSSDIVPD…ITSLVPPPEP (125 aa)) is disordered. The segment covering 45–54 (RAQQRLQELQ) has biased composition (low complexity). Basic and acidic residues predominate over residues 55-77 (AAERKLKPPKKEYKREQHRRREE). A compositionally biased stretch (acidic residues) spans 78–100 (VVEEDEDSEDDDQEDEENDGDDE). In terms of domain architecture, DDT spans 133–192 (LRSMWELASVLNFLHVFRPLLKINAEFSAEEFETALLTPNDTLSDIHIPLLKAIPPVTRM). Disordered stretches follow at residues 450–505 (NGRS…TDFV) and 532–750 (LKKR…TDNS). The segment covering 451–471 (GRSTSSTHPTEPVNDTASGRS) has biased composition (polar residues). Residues 545-585 (EGDEEKGDEEYKWDEDNAEYEEEEEEEEEEDSLSASEEDSD) show a composition bias toward acidic residues. Residues 595-606 (RRETKLRSRSND) are compositionally biased toward basic and acidic residues. Residues 688 to 707 (NADTTNGKENNQLNKSNGTT) are compositionally biased toward polar residues. The segment covering 741-750 (LKDDDKTDNS) has biased composition (basic and acidic residues).

In terms of assembly, interacts (via the DDT domain) with CHR11 (via C-terminus).

It localises to the nucleus. Functionally, probable transcription regulator. The polypeptide is DDT domain-containing protein DDR4 (Arabidopsis thaliana (Mouse-ear cress)).